We begin with the raw amino-acid sequence, 291 residues long: Fructose-1,6-bisphosphatase class 1 1 (291 aa).

Glu-78, Asp-95, Leu-97, and Asp-98 together coordinate Mg(2+). Substrate-binding positions include 98–101 (DGSS), Tyr-203, and Lys-233. Glu-239 serves as a coordination point for Mg(2+).

This sequence belongs to the FBPase class 1 family. Homotetramer. Requires Mg(2+) as cofactor.

Its subcellular location is the cytoplasm. The enzyme catalyses beta-D-fructose 1,6-bisphosphate + H2O = beta-D-fructose 6-phosphate + phosphate. It participates in carbohydrate biosynthesis; gluconeogenesis. In Haloarcula marismortui (strain ATCC 43049 / DSM 3752 / JCM 8966 / VKM B-1809) (Halobacterium marismortui), this protein is Fructose-1,6-bisphosphatase class 1 1.